Reading from the N-terminus, the 155-residue chain is Large ribosomal subunit protein uL15 (155 aa).

Over residues 1-13 (MKLNELRDAEGAT) the composition is skewed to basic and acidic residues. The tract at residues 1–41 (MKLNELRDAEGATKARKRVGRGIGSGSGKTGGRGVKGQKSR) is disordered. The span at 21–35 (RGIGSGSGKTGGRGV) shows a compositional bias: gly residues.

This sequence belongs to the universal ribosomal protein uL15 family. In terms of assembly, part of the 50S ribosomal subunit.

Its function is as follows. Binds to the 23S rRNA. This Chelativorans sp. (strain BNC1) protein is Large ribosomal subunit protein uL15.